We begin with the raw amino-acid sequence, 726 residues long: Germacradienol/geosmin synthase (726 aa).

The segment at 2-354 (TQQPFQLPHF…TSAADVGALL (353 aa)) is germacradienol/germacrene D synthase. The Mg(2+) site is built by D86, E91, N267, T271, Q276, D455, N598, S602, and E606. The short motif at 86-91 (DDHFLE) is the DDXXD motif 1; degenerate element. A geosmin synthase region spans residues 355 to 726 (ADAVAQRARS…VPRSSPALTH (372 aa)). The short motif at 455–459 (DDYYP) is the DDXXD motif 2; degenerate element.

Belongs to the terpene synthase family. Mg(2+) serves as cofactor.

The enzyme catalyses (2E,6E)-farnesyl diphosphate + H2O = (1E,4S,5E,7R)-germacra-1(10),5-dien-11-ol + diphosphate. The catalysed reaction is (1E,4S,5E,7R)-germacra-1(10),5-dien-11-ol + H2O = (-)-geosmin + acetone. It catalyses the reaction (2E,6E)-farnesyl diphosphate = (-)-germacrene D + diphosphate. The protein operates within secondary metabolite biosynthesis; geosmin biosynthesis. Its pathway is sesquiterpene biosynthesis; germacradienol biosynthesis; germacradienol from farnesyl diphosphate: step 1/1. It functions in the pathway sesquiterpene biosynthesis; germacrene D biosynthesis; germacrene D from farnesyl diphosphate: step 1/1. Functionally, tow-domain protein where the N-terminal domain catalyzes the cyclization of farnesyl diphosphate (FPP) to a 85:15 mixture of the sesquiterpene alcohol germacradienol and the sesquiterpene hydrocarbon germacrene D. The C-terminal domain partially converts the germacradienol formed into geosmin, the characteristic odoriferous ('earthy aroma') constituent of Streptomyces species. The sequence is that of Germacradienol/geosmin synthase (cyc2) from Streptomyces coelicolor (strain ATCC BAA-471 / A3(2) / M145).